Reading from the N-terminus, the 310-residue chain is Coproporphyrin III ferrochelatase (310 aa).

Residues His-184 and Glu-265 each coordinate Fe(2+).

This sequence belongs to the ferrochelatase family.

The protein resides in the cytoplasm. The enzyme catalyses Fe-coproporphyrin III + 2 H(+) = coproporphyrin III + Fe(2+). Its pathway is porphyrin-containing compound metabolism; protoheme biosynthesis. Its function is as follows. Involved in coproporphyrin-dependent heme b biosynthesis. Catalyzes the insertion of ferrous iron into coproporphyrin III to form Fe-coproporphyrin III. This is Coproporphyrin III ferrochelatase from Limosilactobacillus reuteri (strain DSM 20016) (Lactobacillus reuteri).